A 444-amino-acid chain; its full sequence is Elongation factor 1-alpha (444 aa).

A tr-type G domain is found at 15–238 (KPHINLAVVG…DSFQPPQRPV (224 aa)). Positions 24 to 31 (GHVDNGKS) are G1. 24 to 31 (GHVDNGKS) is a binding site for GTP. A Mg(2+)-binding site is contributed by Ser31. Residues 80 to 84 (GVTIE) are G2. The tract at residues 101–104 (DLPG) is G3. Residues 101 to 105 (DLPGH) and 163 to 166 (NKMD) contribute to the GTP site. The G4 stretch occupies residues 163 to 166 (NKMD). The tract at residues 202-204 (SAI) is G5.

The protein belongs to the TRAFAC class translation factor GTPase superfamily. Classic translation factor GTPase family. EF-Tu/EF-1A subfamily.

The protein localises to the cytoplasm. The catalysed reaction is GTP + H2O = GDP + phosphate + H(+). Its function is as follows. GTP hydrolase that promotes the GTP-dependent binding of aminoacyl-tRNA to the A-site of ribosomes during protein biosynthesis. The protein is Elongation factor 1-alpha of Pyrobaculum aerophilum (strain ATCC 51768 / DSM 7523 / JCM 9630 / CIP 104966 / NBRC 100827 / IM2).